The chain runs to 479 residues: Ammonium transporter Rh type C (479 aa).

Residues 1–9 (MAWNTNLRW) are Cytoplasmic-facing. The helical transmembrane segment at 10–30 (RLPLTCLLLQVIMVILFGVFV) threads the bilayer. Residues 31 to 60 (RYDFEADAHWWSERTHKNLSDMENEFYYRY) are Extracellular-facing. A glycan (N-linked (GlcNAc...) asparagine) is linked at Asn-48. Residues 61 to 81 (PSFQDVHVMVFVGFGFLMTFL) traverse the membrane as a helical segment. Topologically, residues 82–85 (QRYG) are cytoplasmic. A helical transmembrane segment spans residues 86 to 106 (FSAVGFNFLLAAFGIQWALLM). At 107-123 (QGWFHFLQDRYIVVGVE) the chain is on the extracellular side. The helical transmembrane segment at 124–144 (NLINADFCVASVCVAFGAVLG) threads the bilayer. The Cytoplasmic portion of the chain corresponds to 145-148 (KVSP). The helical transmembrane segment at 149–169 (IQLLIMTFFQVTLFAVNEFIL) threads the bilayer. The Extracellular segment spans residues 170–177 (LNLLKVKD). A helical membrane pass occupies residues 178 to 200 (AGGSMTIHTFGAYFGLTVTRILY). The Cytoplasmic segment spans residues 201 to 218 (RRNLEQSKERQNSVYQSD). A helical transmembrane segment spans residues 219-239 (LFAMIGTLFLWMYWPSFNSAI). The Extracellular segment spans residues 240 to 250 (SYHGDSQHRAA). A helical membrane pass occupies residues 251–271 (INTYCSLAACVLTSVAISSAL). The Cytoplasmic portion of the chain corresponds to 272-281 (HKKGKLDMVH). A helical membrane pass occupies residues 282–302 (IQNATLAGGVAVGTAAEMMLM). Position 303 (Pro-303) is a topological domain, extracellular. A helical membrane pass occupies residues 304 to 324 (YGALIIGFVCGIISTLGFVYL). At 325 to 345 (TPFLESRLHIQDTCGINNLHG) the chain is on the cytoplasmic side. A helical membrane pass occupies residues 346–366 (IPGIIGGIVGAVTAASASLEV). The Extracellular segment spans residues 367-394 (YGKEGLVHSFDFQGFNGDWTARTQGKFQ). Residues 395–415 (IYGLLVTLAMALMGGIIVGLI) form a helical membrane-spanning segment. The Cytoplasmic segment spans residues 416-479 (LRLPFWGQPS…PMASSVPLVP (64 aa)).

This sequence belongs to the ammonium transporter (TC 2.A.49) family. Rh subfamily. As to quaternary structure, homotrimer. N-glycosylated. In terms of tissue distribution, expressed in brain, testis, placenta, pancreas, esophagus and prostate. Expressed in squamous epithelial tissues (at protein level). Expressed in kidney.

It localises to the cell membrane. It is found in the apical cell membrane. The catalysed reaction is NH4(+)(in) = NH4(+)(out). It carries out the reaction methylamine(out) = methylamine(in). It catalyses the reaction CO2(out) = CO2(in). Ammonium transporter involved in the maintenance of acid-base homeostasis. Transports ammonium and its related derivative methylammonium across the plasma membrane of epithelial cells likely contributing to renal transepithelial ammonia transport and ammonia metabolism. Postulated to primarily mediate an electroneutral bidirectional transport of NH3 ammonia species according to a mechanism that implies interaction of an NH4(+) ion with acidic residues of the pore entry followed by dissociation of NH4(+) into NH3 and H(+). As a result NH3 transits through the central pore and is protonated on the extracellular side reforming NH4(+). May act as a CO2 channel providing for renal acid secretion. The chain is Ammonium transporter Rh type C (RHCG) from Homo sapiens (Human).